A 145-amino-acid polypeptide reads, in one-letter code: Protein H2A.5 (145 aa).

The segment at 118–145 is disordered; the sequence is SPAAAEKEAKSQKAAAKSPKKKTAATKE. Residues 135 to 138 carry the SPKK motif motif; it reads SPKK. Basic residues predominate over residues 135 to 145; it reads SPKKKTAATKE.

Belongs to the histone H2A family. As to quaternary structure, the nucleosome is a histone octamer containing two molecules each of H2A, H2B, H3 and H4 assembled in one H3-H4 heterotetramer and two H2A-H2B heterodimers. The octamer wraps approximately 147 bp of DNA. In terms of tissue distribution, abundant in meristematic tissues.

The protein resides in the nucleus. It localises to the chromosome. In terms of biological role, core component of nucleosome. Nucleosomes wrap and compact DNA into chromatin, limiting DNA accessibility to the cellular machineries which require DNA as a template. Histones thereby play a central role in transcription regulation, DNA repair, DNA replication and chromosomal stability. DNA accessibility is regulated via a complex set of post-translational modifications of histones, also called histone code, and nucleosome remodeling. The polypeptide is Protein H2A.5 (H2A-2) (Triticum aestivum (Wheat)).